A 208-amino-acid polypeptide reads, in one-letter code: Small ribosomal subunit protein uS2 (208 aa).

It belongs to the universal ribosomal protein uS2 family.

The protein is Small ribosomal subunit protein uS2 of Pyrobaculum calidifontis (strain DSM 21063 / JCM 11548 / VA1).